Here is a 477-residue protein sequence, read N- to C-terminus: Delayed-rectifier potassium channel regulatory subunit KCNS2 (477 aa).

Residues 1-184 (MTRQSLWDVS…LALDNPGYSV (184 aa)) are Cytoplasmic-facing. A helical transmembrane segment spans residues 185 to 206 (LSRVFSVLSILVVLGSIITMCL). The Extracellular segment spans residues 207-225 (NSLPDFQIPDSQGNPGEDP). The helical transmembrane segment at 226 to 248 (RFEIVEHFGIAWFTFELVARFAV) threads the bilayer. The Cytoplasmic segment spans residues 249–259 (APDFLKFFKNA). Residues 260 to 280 (LNLIDLMSIVPFYITLVVNLV) traverse the membrane as a helical segment. The Extracellular portion of the chain corresponds to 281 to 290 (VESSPTLANL). The helical; Voltage-sensor transmembrane segment at 291 to 311 (GRVAQVLRLMRIFRILKLARH) threads the bilayer. Over 312–326 (STGLRSLGATLKYSY) the chain is Cytoplasmic. Residues 327 to 348 (KEVGLLLLYLSVGISIFSVVAY) traverse the membrane as a helical segment. The Extracellular portion of the chain corresponds to 349–361 (TIEKEENEGLATI). The helical intramembrane region spans 362–373 (PACWWWATVSMT). Residues 374–379 (TVGYGD) carry the Selectivity filter motif. Residues 374-381 (TVGYGDVV) lie within the membrane without spanning it. The Extracellular portion of the chain corresponds to 382 to 388 (PGTTAGK). A helical membrane pass occupies residues 389–417 (LTASACILAGILVVVLPITLIFNKFSHFY). Residues 418-477 (RRQKQLESAMRSCDFGDGMKEVPSVNLRDYYAHKVKSLMASLTNMSRSSPSELSLDDSLH) lie on the Cytoplasmic side of the membrane.

This sequence belongs to the potassium channel family. S (TC 1.A.1.2) subfamily. Kv9.2/KCNS2 sub-subfamily. Heterotetramer with KCNB1 and KCNB2. Does not form homomultimers. In terms of tissue distribution, detected in brain, but not in the other tissues tested. Expression was highest in the olfactory bulb, cerebral cortex, hippocampus, habenula, basolateral amygdaloid nuclei and cerebellum.

The protein localises to the cell membrane. Potassium channel regulatory subunit that modulate the delayed rectifier voltage-gated potassium channel activity of KCNB1 and KCNB2 by altering their kinetics, expression levels, and shifting the half-inactivation potential to more polarized values. While it does not form functional channels on its own, it can form functional heterotetrameric channels with KCNB1 and KCNB2. Each regulatory subunit has unique regulatory properties that can lead to extensive inhibition, significant changes in kinetics, and/or substantial shifts in the voltage dependencies of the inactivation process. In Mus musculus (Mouse), this protein is Delayed-rectifier potassium channel regulatory subunit KCNS2.